We begin with the raw amino-acid sequence, 439 residues long: Signal recognition particle 54 kDa protein (439 aa).

GTP contacts are provided by residues 104–111 (GLQGSGKT), 184–188 (DTAGR), and 242–245 (SKLD).

This sequence belongs to the GTP-binding SRP family. SRP54 subfamily. Part of the signal recognition particle protein translocation system, which is composed of SRP and FtsY. Archaeal SRP consists of a 7S RNA molecule of 300 nucleotides and two protein subunits: SRP54 and SRP19.

It is found in the cytoplasm. The catalysed reaction is GTP + H2O = GDP + phosphate + H(+). Functionally, involved in targeting and insertion of nascent membrane proteins into the cytoplasmic membrane. Binds to the hydrophobic signal sequence of the ribosome-nascent chain (RNC) as it emerges from the ribosomes. The SRP-RNC complex is then targeted to the cytoplasmic membrane where it interacts with the SRP receptor FtsY. The polypeptide is Signal recognition particle 54 kDa protein (Methanococcoides burtonii (strain DSM 6242 / NBRC 107633 / OCM 468 / ACE-M)).